A 485-amino-acid polypeptide reads, in one-letter code: NADH-quinone oxidoreductase subunit N (485 aa).

14 consecutive transmembrane segments (helical) span residues I10–L30, I40–I60, V71–V91, G107–H127, L129–I149, F164–M184, F209–P229, I248–G268, W276–L296, L304–P324, V336–G356, A377–I397, G410–V430, and L454–L474.

This sequence belongs to the complex I subunit 2 family. In terms of assembly, NDH-1 is composed of 14 different subunits. Subunits NuoA, H, J, K, L, M, N constitute the membrane sector of the complex.

It is found in the cell inner membrane. It carries out the reaction a quinone + NADH + 5 H(+)(in) = a quinol + NAD(+) + 4 H(+)(out). In terms of biological role, NDH-1 shuttles electrons from NADH, via FMN and iron-sulfur (Fe-S) centers, to quinones in the respiratory chain. The immediate electron acceptor for the enzyme in this species is believed to be ubiquinone. Couples the redox reaction to proton translocation (for every two electrons transferred, four hydrogen ions are translocated across the cytoplasmic membrane), and thus conserves the redox energy in a proton gradient. This chain is NADH-quinone oxidoreductase subunit N, found in Francisella tularensis subsp. holarctica (strain FTNF002-00 / FTA).